The chain runs to 228 residues: Thermonuclease (228 aa).

The signal sequence occupies residues 1–23 (MTEYLLSAGICMAIVSILLIGMA). A propeptide spanning residues 24-60 (ISNVSKGQYAKRFFFFATSCLVLTLVVVSSLSSSANA) is cleaved from the precursor. Residue D100 participates in Ca(2+) binding. R114 is an active-site residue. Residues D119 and T120 each contribute to the Ca(2+) site. Active-site residues include E122 and R166.

It belongs to the thermonuclease family. The cofactor is Ca(2+).

It is found in the secreted. The enzyme catalyses Endonucleolytic cleavage to nucleoside 3'-phosphates and 3'-phosphooligonucleotide end-products.. In terms of biological role, enzyme that catalyzes the hydrolysis of both DNA and RNA at the 5' position of the phosphodiester bond. The sequence is that of Thermonuclease (nuc) from Staphylococcus aureus (strain MSSA476).